A 465-amino-acid chain; its full sequence is ATP synthase subunit beta (465 aa).

148 to 155 (GGAGVGKT) contacts ATP.

The protein belongs to the ATPase alpha/beta chains family. In terms of assembly, F-type ATPases have 2 components, CF(1) - the catalytic core - and CF(0) - the membrane proton channel. CF(1) has five subunits: alpha(3), beta(3), gamma(1), delta(1), epsilon(1). CF(0) has three main subunits: a(1), b(2) and c(9-12). The alpha and beta chains form an alternating ring which encloses part of the gamma chain. CF(1) is attached to CF(0) by a central stalk formed by the gamma and epsilon chains, while a peripheral stalk is formed by the delta and b chains.

It localises to the cell inner membrane. It catalyses the reaction ATP + H2O + 4 H(+)(in) = ADP + phosphate + 5 H(+)(out). Functionally, produces ATP from ADP in the presence of a proton gradient across the membrane. The catalytic sites are hosted primarily by the beta subunits. The protein is ATP synthase subunit beta of Chromobacterium violaceum (strain ATCC 12472 / DSM 30191 / JCM 1249 / CCUG 213 / NBRC 12614 / NCIMB 9131 / NCTC 9757 / MK).